Consider the following 197-residue polypeptide: Guanylate kinase (197 aa).

Residues 7 to 185 (GLIIILSSPS…TLKKIHEIIV (179 aa)) enclose the Guanylate kinase-like domain. 14–21 (SPSGTGKS) contributes to the ATP binding site.

It belongs to the guanylate kinase family.

It localises to the cytoplasm. The catalysed reaction is GMP + ATP = GDP + ADP. Its function is as follows. Essential for recycling GMP and indirectly, cGMP. The protein is Guanylate kinase of Rickettsia typhi (strain ATCC VR-144 / Wilmington).